A 679-amino-acid polypeptide reads, in one-letter code: F-box/LRR-repeat protein 5 (679 aa).

The interval 1–159 (MAPFPDEVDV…IKQQVMLQHC (159 aa)) is hemerythrin-like. Fe(3+) contacts are provided by His-15, His-57, Glu-58, Glu-61, His-80, His-126, and Glu-130. The region spanning 205–251 (RVSVSSLPQELLLRIFRFLGPQDLCRCAQVCSVWTQVTRTGSLWRHL) is the F-box domain. LRR repeat units lie at residues 316–342 (EKLLLNGIIQKLLPAVGSSVRSLSLAY), 343–367 (SSTLSSKMVRQMLSLCPNLTHLDLT), 368–395 (QTDVSDSAFDSWCALGACGTLQHLDLSG), 396–426 (CDKITDRTLKILSVGLGDSSTPSPAHKLLQA), 565–595 (CWFEGQSCAEHHNRTDQSGAQRALRFLSLSG), 596–623 (CHQITDLGLRCVCLRGGLPLLEHLNLSG), and 624–649 (CPLITGAGLQEVVSASPALNIEHFYY). Positions 650, 664, 674, and 675 each coordinate [2Fe-2S] cluster.

In terms of assembly, part of a SCF (SKP1-cullin-F-box) protein ligase complex. Requires [2Fe-2S] cluster as cofactor. Ubiquitinated upon iron and oxygen depletion, leading to its degradation by the proteasome. Ubiquitination is regulated by the hemerythrin-like region that acts as an oxygen and iron sensor.

The protein localises to the cytoplasm. It localises to the perinuclear region. Its subcellular location is the nucleus. Its pathway is protein modification; protein ubiquitination. In terms of biological role, component of some SCF (SKP1-cullin-F-box) protein ligase complex that plays a central role in iron homeostasis by promoting the ubiquitination and subsequent degradation of ireb2/irp2. Upon high iron and oxygen level, it specifically recognizes and binds ireb2/irp2, promoting its ubiquitination and degradation by the proteasome. This is F-box/LRR-repeat protein 5 (fbxl5) from Danio rerio (Zebrafish).